The sequence spans 94 residues: Gibberellin-regulated protein 11 (94 aa).

The signal sequence occupies residues 1–23; that stretch reads MAVFRVLLASLLISLLVLDFVHA.

This sequence belongs to the GASA family. Post-translationally, six disulfide bonds may be present.

It is found in the secreted. In terms of biological role, gibberellin-regulated protein that may function in hormonal controlled steps of development such as seed germination, flowering and seed maturation. The chain is Gibberellin-regulated protein 11 (GASA11) from Arabidopsis thaliana (Mouse-ear cress).